The following is a 268-amino-acid chain: 4-hydroxy-tetrahydrodipicolinate reductase (268 aa).

NAD(+) is bound at residue 8–13 (GAAGRM). Residue Arg36 participates in NADP(+) binding. Residues 99–101 (GTT) and 123–126 (AANF) each bind NAD(+). Residue His156 is the Proton donor/acceptor of the active site. (S)-2,3,4,5-tetrahydrodipicolinate is bound at residue His157. Residue Lys160 is the Proton donor of the active site. (S)-2,3,4,5-tetrahydrodipicolinate is bound at residue 166–167 (GT).

This sequence belongs to the DapB family.

It localises to the cytoplasm. It carries out the reaction (S)-2,3,4,5-tetrahydrodipicolinate + NAD(+) + H2O = (2S,4S)-4-hydroxy-2,3,4,5-tetrahydrodipicolinate + NADH + H(+). The catalysed reaction is (S)-2,3,4,5-tetrahydrodipicolinate + NADP(+) + H2O = (2S,4S)-4-hydroxy-2,3,4,5-tetrahydrodipicolinate + NADPH + H(+). The protein operates within amino-acid biosynthesis; L-lysine biosynthesis via DAP pathway; (S)-tetrahydrodipicolinate from L-aspartate: step 4/4. Functionally, catalyzes the conversion of 4-hydroxy-tetrahydrodipicolinate (HTPA) to tetrahydrodipicolinate. The protein is 4-hydroxy-tetrahydrodipicolinate reductase of Pseudomonas fluorescens (strain Pf0-1).